The following is a 493-amino-acid chain: Inosine-5'-monophosphate dehydrogenase (493 aa).

CBS domains are found at residues 97–155 (VIID…NAPI) and 159–219 (MTSE…AKDE). NAD(+) contacts are provided by residues Asp-253 and 303–305 (GIG). K(+) is bound by residues Gly-305 and Gly-307. Residue Ser-308 coordinates IMP. Cys-310 lines the K(+) pocket. The active-site Thioimidate intermediate is Cys-310. IMP contacts are provided by residues 343 to 345 (DGG), 366 to 367 (GS), and 390 to 394 (YRGMG). Arg-406 (proton acceptor) is an active-site residue. Glu-421 contributes to the IMP binding site. Residues Glu-475, Ser-476, and His-477 each contribute to the K(+) site.

It belongs to the IMPDH/GMPR family. Homotetramer. The cofactor is K(+).

The catalysed reaction is IMP + NAD(+) + H2O = XMP + NADH + H(+). It functions in the pathway purine metabolism; XMP biosynthesis via de novo pathway; XMP from IMP: step 1/1. Its activity is regulated as follows. Mycophenolic acid (MPA) is a non-competitive inhibitor that prevents formation of the closed enzyme conformation by binding to the same site as the amobile flap. In contrast, mizoribine monophosphate (MZP) is a competitive inhibitor that induces the closed conformation. MPA is a potent inhibitor of mammalian IMPDHs but a poor inhibitor of the bacterial enzymes. MZP is a more potent inhibitor of bacterial IMPDH. In terms of biological role, catalyzes the conversion of inosine 5'-phosphate (IMP) to xanthosine 5'-phosphate (XMP), the first committed and rate-limiting step in the de novo synthesis of guanine nucleotides, and therefore plays an important role in the regulation of cell growth. The protein is Inosine-5'-monophosphate dehydrogenase of Streptococcus pyogenes serotype M1.